We begin with the raw amino-acid sequence, 179 residues long: Large ribosomal subunit protein uL5 (179 aa).

It belongs to the universal ribosomal protein uL5 family. As to quaternary structure, part of the 50S ribosomal subunit; part of the 5S rRNA/L5/L18/L25 subcomplex. Contacts the 5S rRNA and the P site tRNA. Forms a bridge to the 30S subunit in the 70S ribosome.

Its function is as follows. This is one of the proteins that bind and probably mediate the attachment of the 5S RNA into the large ribosomal subunit, where it forms part of the central protuberance. In the 70S ribosome it contacts protein S13 of the 30S subunit (bridge B1b), connecting the 2 subunits; this bridge is implicated in subunit movement. Contacts the P site tRNA; the 5S rRNA and some of its associated proteins might help stabilize positioning of ribosome-bound tRNAs. The sequence is that of Large ribosomal subunit protein uL5 from Marinomonas sp. (strain MWYL1).